Consider the following 504-residue polypeptide: Pyruvate kinase (504 aa).

Substrate is bound at residue R53. K(+)-binding residues include N55, S57, D88, and T89. An ATP-binding site is contributed by 55–58; the sequence is NFSH. The ATP site is built by R95 and K181. Position 246 (E246) interacts with Mg(2+). Residues G269, D270, and T302 each coordinate substrate. Residue D270 coordinates Mg(2+).

It belongs to the pyruvate kinase family. In terms of assembly, homotetramer. Mg(2+) is required as a cofactor. K(+) serves as cofactor.

The protein resides in the cytoplasm. The enzyme catalyses pyruvate + ATP = phosphoenolpyruvate + ADP + H(+). It functions in the pathway carbohydrate degradation; glycolysis; pyruvate from D-glyceraldehyde 3-phosphate: step 5/5. The chain is Pyruvate kinase (CDC19) from Candida albicans (strain SC5314 / ATCC MYA-2876) (Yeast).